The chain runs to 1074 residues: Phospholipase D1 (1074 aa).

The PX domain occupies 81-212; the sequence is IKAQVLEVER…TEFLDISQLS (132 aa). A PH domain is found at 219-328; the sequence is PKGIEGMIMK…WGGAIEEFIQ (110 aa). S-palmitoyl cysteine attachment occurs at residues Cys240 and Cys241. The region spanning 459–486 is the PLD phosphodiesterase 1 domain; it reads YLWAHHEKLVIIDQSVAFVGGIDLAYGR. The segment at 463-928 is catalytic; that stretch reads HHEKLVIIDQ…MLGKRDSEMA (466 aa). Phosphoserine occurs at positions 499, 561, and 629. The PLD phosphodiesterase 2 domain maps to 891–918; it reads ELIYVHSKLLIADDNTVIIGSANINDRS.

The protein belongs to the phospholipase D family. As to quaternary structure, interacts with PIP5K1B. In terms of tissue distribution, expressed abundantly in the pancreas and heart and at high levels in brain, placenta, spleen, uterus and small intestine.

The protein resides in the cytoplasm. The protein localises to the perinuclear region. Its subcellular location is the endoplasmic reticulum membrane. It is found in the golgi apparatus membrane. It localises to the late endosome membrane. The catalysed reaction is a 1,2-diacyl-sn-glycero-3-phosphocholine + H2O = a 1,2-diacyl-sn-glycero-3-phosphate + choline + H(+). The enzyme catalyses ethanol + a 1,2-diacyl-sn-glycero-3-phosphocholine = 1,2-diacyl-sn-glycero-3-phosphoethanol + choline. It carries out the reaction 1,2-dihexadecanoyl-sn-glycero-3-phosphocholine + H2O = 1,2-dihexadecanoyl-sn-glycero-3-phosphate + choline + H(+). Its activity is regulated as follows. Stimulated by phosphatidylinositol 4,5-bisphosphate and phosphatidylinositol 3,4,5-trisphosphate, activated by the phosphokinase C-alpha, by the ADP-ribosylation factor-1 (ARF-1), and to a lesser extent by GTP-binding proteins: RHO A, RAC-1 and CDC42. Inhibited by oleate. Function as phospholipase selective for phosphatidylcholine. Implicated as a critical step in numerous cellular pathways, including signal transduction, membrane trafficking, and the regulation of mitosis. May be involved in the regulation of perinuclear intravesicular membrane traffic. In Homo sapiens (Human), this protein is Phospholipase D1.